The following is a 190-amino-acid chain: MSTVGTGKLTRAQRRAAARKNKRNTRVVQPVIVEPIASGQGKAIKAWTGYSVSKWTASCAAAEAKVTSAITISLPNELSSERNKQLKVGRVLLWLGLLPSVSGTVKSCVTETQTTAAASFQVALAVADNSKDVVAAMYPEAFKGITLEQLTADLTIYLYSSAALTEGDVIVHLEVEHVRPTFDDSFTPVY.

Residues 1-24 (MSTVGTGKLTRAQRRAAARKNKRN) are disordered. The residue at position 2 (serine 2) is an N-acetylserine; by host. Basic residues predominate over residues 11–24 (RAQRRAAARKNKRN).

The protein belongs to the bromovirus capsid protein family.

Its subcellular location is the virion. Functionally, capsid protein. Probably binds RNA and plays a role in packaging. In Cowpea chlorotic mottle virus (CCMV), this protein is Capsid protein.